A 207-amino-acid chain; its full sequence is Peptidyl-tRNA hydrolase (207 aa).

Residue Tyr-14 coordinates tRNA. The active-site Proton acceptor is the His-19. Residues Tyr-64, Asn-66, and Asn-112 each contribute to the tRNA site.

Belongs to the PTH family. As to quaternary structure, monomer.

It is found in the cytoplasm. It catalyses the reaction an N-acyl-L-alpha-aminoacyl-tRNA + H2O = an N-acyl-L-amino acid + a tRNA + H(+). Functionally, hydrolyzes ribosome-free peptidyl-tRNAs (with 1 or more amino acids incorporated), which drop off the ribosome during protein synthesis, or as a result of ribosome stalling. In terms of biological role, catalyzes the release of premature peptidyl moieties from peptidyl-tRNA molecules trapped in stalled 50S ribosomal subunits, and thus maintains levels of free tRNAs and 50S ribosomes. In Rhodopseudomonas palustris (strain BisB5), this protein is Peptidyl-tRNA hydrolase.